Reading from the N-terminus, the 230-residue chain is Thiamine-triphosphatase (230 aa).

Residue A2 is modified to N-acetylalanine. In terms of domain architecture, CYTH spans 5–201 (LIEVERKFLP…AKLIVYLQRF (197 aa)). Mg(2+) contacts are provided by E7 and E9. Substrate-binding residues include K11, R55, R57, K65, and R125. 3 residues coordinate Mg(2+): D145, E157, and E159. E157 contacts substrate. A substrate-binding site is contributed by K193.

Belongs to the ThTPase family. In terms of assembly, monomer. It depends on Mg(2+) as a cofactor.

The protein localises to the cytoplasm. It catalyses the reaction thiamine triphosphate + H2O = thiamine diphosphate + phosphate + H(+). Hydrolase highly specific for thiamine triphosphate (ThTP). This is Thiamine-triphosphatase (THTPA) from Macaca fascicularis (Crab-eating macaque).